Reading from the N-terminus, the 257-residue chain is 5'-nucleotidase SurE (257 aa).

A divalent metal cation-binding residues include D8, D9, S40, and N93.

It belongs to the SurE nucleotidase family. Requires a divalent metal cation as cofactor.

The protein localises to the cytoplasm. The enzyme catalyses a ribonucleoside 5'-phosphate + H2O = a ribonucleoside + phosphate. In terms of biological role, nucleotidase that shows phosphatase activity on nucleoside 5'-monophosphates. This Phenylobacterium zucineum (strain HLK1) protein is 5'-nucleotidase SurE.